Reading from the N-terminus, the 258-residue chain is tRNA pseudouridine synthase A (258 aa).

Catalysis depends on Asp61, which acts as the Nucleophile. Tyr119 lines the substrate pocket.

This sequence belongs to the tRNA pseudouridine synthase TruA family. As to quaternary structure, homodimer.

The enzyme catalyses uridine(38/39/40) in tRNA = pseudouridine(38/39/40) in tRNA. Its function is as follows. Formation of pseudouridine at positions 38, 39 and 40 in the anticodon stem and loop of transfer RNAs. This Chlorobium phaeobacteroides (strain DSM 266 / SMG 266 / 2430) protein is tRNA pseudouridine synthase A.